Reading from the N-terminus, the 548-residue chain is MQDRLRILEDLNMLYIRQMALSLEDTELQRKLDHEIRMREGACKLLAACSQREQALEATKSLLVCNSRILSYMGELQRRKEAQVLGKTGRRPSDSVQPPERSPCRGRVCISDLRIPLMWKDTEYFKNKGDLHRWAVFLLLQLGEQIQDTEMVLVDRTLTDISFQNNAIFAEAGPDFELRLELYGACVEEEGALAGAPKRLATKLSSSLGRSSGKRVRASLDSAGGSGNSPILLPTPAVGGPRYHLLAHTTLTLAAVQDGFRTHDLTLTSHEENPAWLPLYGSMCCRLVAQPLCMTQPTASGTLRVQQAGELQSGTLVHGVLKGTNLFCYWRSEDADSGQEPLFTILINKETRVRAGELEQAPEWPFTLSISNRYGDDEVTNTLQVQSRDALQSWMEALWQLFLDMSQWKHCCDEVMKIETPAPRKPPQALAKQGSLYHEMAIEPLEDIAAVTDILAQREGTRLEPPPPWLAMFTDQPALRSSCSPASVPTWTQPLPWGRPRTFSLDAVPADHSLGPSRSVAPLPPQRSPQSRGFYSKSQLSTWLQSPV.

The REM-1 domain maps to 10–85; it reads DLNMLYIRQM…LQRRKEAQVL (76 aa). Phosphoserine is present on residues serine 22 and serine 93. Positions 83-103 are disordered; the sequence is QVLGKTGRRPSDSVQPPERSP. The residue at position 217 (arginine 217) is an Asymmetric dimethylarginine. Serine 219 is modified (phosphoserine). Residues 296–403 form the PH domain; that stretch reads QPTASGTLRV…WMEALWQLFL (108 aa). Phosphoserine occurs at positions 504, 513, and 528. The disordered stretch occupies residues 506–548; sequence DAVPADHSLGPSRSVAPLPPQRSPQSRGFYSKSQLSTWLQSPV. Residues 528–548 are compositionally biased toward polar residues; the sequence is SPQSRGFYSKSQLSTWLQSPV.

In terms of assembly, interacts via its C-terminal region with the TAX1BP3 PDZ domain. This interaction facilitates Rho-mediated activation of the c-Fos serum response element (SRE). Interacts with SEPT9. Specifically binds to GTP-bound RHOA, RHOB and RHOC and inhibits their GTPase activity.

Functionally, mediates Rho signaling to activate NF-kappa-B and may confer increased resistance to apoptosis to cells in gastric tumorigenesis. May play a novel role in the organization of septin structures. In Rattus norvegicus (Rat), this protein is Rhotekin.